The following is a 140-amino-acid chain: MTKLNGTGLLKGLAITFKELWKKPVTLEYPEHKEKLPPRFHGSFTLHSEKCIACGLCQQACPNKVIKVGSIKDENNKRKLASYEMEMKYCLFCGLCVEACPTNALVFNQEYELAKYRIEDIKLTLFKREEITTGEGSENA.

4Fe-4S ferredoxin-type domains follow at residues 42-71 and 81-110; these read GSFTLHSEKCIACGLCQQACPNKVIKVGSI and ASYEMEMKYCLFCGLCVEACPTNALVFNQE. Residues C51, C54, C57, C61, C90, C93, C96, and C100 each contribute to the [4Fe-4S] cluster site.

It belongs to the complex I 23 kDa subunit family. In terms of assembly, NDH-1 is composed of 14 different subunits. Subunits NuoA, H, J, K, L, M, N constitute the membrane sector of the complex. It depends on [4Fe-4S] cluster as a cofactor.

The protein localises to the cell membrane. The catalysed reaction is a quinone + NADH + 5 H(+)(in) = a quinol + NAD(+) + 4 H(+)(out). Functionally, NDH-1 shuttles electrons from NADH, via FMN and iron-sulfur (Fe-S) centers, to quinones in the respiratory chain. The immediate electron acceptor for the enzyme in this species is believed to be ubiquinone. Couples the redox reaction to proton translocation (for every two electrons transferred, four hydrogen ions are translocated across the cytoplasmic membrane), and thus conserves the redox energy in a proton gradient. The chain is NADH-quinone oxidoreductase subunit I from Carboxydothermus hydrogenoformans (strain ATCC BAA-161 / DSM 6008 / Z-2901).